Consider the following 143-residue polypeptide: MVKIVDNSEVYNLIKNVTDRLGIEIIEINTFRKRGEGRVQIVLYKGDDFGVDTLCDLHKMILLNLEAVLKYNFSLEISTPGINRKIKSDREFKIFEGKKIKLMLDNDFEEGFILKAGADSFIFKTDNKEVKVLYSDVKKAKLS.

It belongs to the RimP family.

Its subcellular location is the cytoplasm. Functionally, required for maturation of 30S ribosomal subunits. The protein is Ribosome maturation factor RimP of Borrelia hermsii (strain HS1 / DAH).